We begin with the raw amino-acid sequence, 397 residues long: CCA-adding enzyme (397 aa).

Residues glycine 32 and arginine 35 each contribute to the ATP site. The CTP site is built by glycine 32 and arginine 35. Mg(2+)-binding residues include aspartate 45 and aspartate 47. Residues arginine 116, aspartate 159, arginine 162, arginine 165, and arginine 168 each coordinate ATP. Residues arginine 116, aspartate 159, arginine 162, arginine 165, and arginine 168 each contribute to the CTP site.

The protein belongs to the tRNA nucleotidyltransferase/poly(A) polymerase family. Bacterial CCA-adding enzyme type 3 subfamily. As to quaternary structure, homodimer. Mg(2+) serves as cofactor.

It carries out the reaction a tRNA precursor + 2 CTP + ATP = a tRNA with a 3' CCA end + 3 diphosphate. The catalysed reaction is a tRNA with a 3' CCA end + 2 CTP + ATP = a tRNA with a 3' CCACCA end + 3 diphosphate. In terms of biological role, catalyzes the addition and repair of the essential 3'-terminal CCA sequence in tRNAs without using a nucleic acid template. Adds these three nucleotides in the order of C, C, and A to the tRNA nucleotide-73, using CTP and ATP as substrates and producing inorganic pyrophosphate. tRNA 3'-terminal CCA addition is required both for tRNA processing and repair. Also involved in tRNA surveillance by mediating tandem CCA addition to generate a CCACCA at the 3' terminus of unstable tRNAs. While stable tRNAs receive only 3'-terminal CCA, unstable tRNAs are marked with CCACCA and rapidly degraded. The chain is CCA-adding enzyme from Levilactobacillus brevis (strain ATCC 367 / BCRC 12310 / CIP 105137 / JCM 1170 / LMG 11437 / NCIMB 947 / NCTC 947) (Lactobacillus brevis).